The sequence spans 198 residues: Secreted RxLR effector protein PITG_22926 (198 aa).

An N-terminal signal peptide occupies residues 1-20 (MLRSFLLIVATVSLFGQCKP). Residues 43–52 (RFLRTNDEER) carry the RxLR-dEER motif.

This sequence belongs to the RxLR effector family. As to quaternary structure, interacts with host MAP3Kbeta2 in the nucleoplasm.

It is found in the secreted. The protein resides in the host nucleus. It localises to the host nucleolus. Its function is as follows. Secreted effector that promotes P.infestans colonization of plant host. Specifically suppresses Avr4/Cf4- and AvrPto/Pto-triggered cell death. Targets the potato MAP3Kbeta2 kinase, a positive regulator of cell death associated with plant immunity, and perturbs signaling pathways triggered by MAP3Kbeta2. This Phytophthora infestans (strain T30-4) (Potato late blight agent) protein is Secreted RxLR effector protein PITG_22926.